Here is a 118-residue protein sequence, read N- to C-terminus: Heavy metal-associated isoprenylated plant protein 47 (118 aa).

The HMA domain maps to 1 to 67 (MRIKLSVNSE…KACHVTLETL (67 aa)). Position 115 is a cysteine methyl ester (Cys-115). Cys-115 is lipidated: S-farnesyl cysteine. The propeptide at 116 to 118 (LVM) is removed in mature form.

Belongs to the HIPP family.

Heavy-metal-binding protein. The protein is Heavy metal-associated isoprenylated plant protein 47 of Arabidopsis thaliana (Mouse-ear cress).